Consider the following 483-residue polypeptide: MATPLQIMPLPVWPITFLEDAVVYLSALFTPWFTAFCVLWLHRYVRLIVHCYSHWTYKSKPIPSKPSYTSDDVTVVIPTIHDNFDELRPSLESILATKPHELIMVTTADKFEDLQRVAKTLSSPNIRIFCTQYANKRIQVCEALPKITTRITIMADDDVTWPSTMMPWILAPFEDPKIGGVGTCQRVKRVREGGLGLRIWNWLGAAYIERRNFEISATHNMDGGTSCMSGRTGAYRSEILRDYEFLEGFMKEEWWGKILKADDDNFVSRWLVSHKWKTWIQYEQECELETTLEDNIKFLYQCSRWARSNWRSNWTSLVKERHVWKQQWWCTYALHIATFTSLAFVFDFLILAALWWGTEGWEPVNRNRAIYAQLAFLAFSKVVKLVGLFRRHPADIMFLPVSIIFGYFHGLIKIYAGLTLNMTSWGSRTDGDTDDAHRLAPGPVRCSSLNTPRSEHKLPHYMQERDEIVNEKQQMREEEWEHL.

The helical transmembrane segment at Ala-21 to Leu-41 threads the bilayer. The Dxd motif motif lies at Asp-156–Asp-158. Positions Gln-301 to Trp-305 match the QxxxRW motif motif. A glycan (N-linked (GlcNAc...) asparagine) is linked at Asn-313. Transmembrane regions (helical) follow at residues Ile-336–Trp-356, Ala-369–Phe-389, and Ile-396–Ala-416. N-linked (GlcNAc...) asparagine glycosylation occurs at Asn-421.

The protein belongs to the GT2 glycosyltransferase family.

The protein localises to the cell membrane. Glycosyltransferase that plays an important role in infection-related morphogenesis and pathogenesis. Involved in stress tolerance and hyphal hydrophobicity via its regulation of the expression of nydrophobin MPG1. May regulate growth, pathogenicity, and cell wall integrity (CWI) through glycosylation of heat shock protein SSB1, and other (unidentified) substrates may contribute to conidiation. Candidate proteins as potential substrates of GT2 include several heat shock proteins (SSB1/MGG_02503, MGG_06759 and MGG_06958), two coiled-coil domain-containing proteins (MGG_04321 and MGG_09571), aminopeptidase 2 (MGG_16472), and a nuclease domain-containing protein (MGG_12646). The polypeptide is Type 2 glycosyltransferase (Pyricularia oryzae (strain 70-15 / ATCC MYA-4617 / FGSC 8958) (Rice blast fungus)).